The primary structure comprises 134 residues: Transcription antitermination protein NusB (134 aa).

Belongs to the NusB family.

In terms of biological role, involved in transcription antitermination. Required for transcription of ribosomal RNA (rRNA) genes. Binds specifically to the boxA antiterminator sequence of the ribosomal RNA (rrn) operons. This is Transcription antitermination protein NusB from Shewanella sp. (strain MR-4).